We begin with the raw amino-acid sequence, 279 residues long: Arabinooligosaccharides transport system permease protein AraQ (279 aa).

6 helical membrane passes run 8–28, 79–99, 110–130, 140–160, 184–204, and 245–265; these read ILSWLLTIGFAFIAFIAVFPL, VWISIVIVVLSLLFSSMVGYA, FFFLLVLIILMIPFEILMLPL, VNTYTAVILPAIVAPIAVFFF, GIFFKIMLPLMGPSLAAMAIL, and ILLAGSVMTIVPIVILFIFFQ. An ABC transmembrane type-1 domain is found at 75–264; the sequence is FGNSVWISIV…VPIVILFIFF (190 aa).

Belongs to the binding-protein-dependent transport system permease family. MalFG subfamily. As to quaternary structure, the complex is composed of two ATP-binding proteins (MsmX), two transmembrane proteins (AraP and AraQ) and a solute-binding protein (AraN).

Its subcellular location is the cell membrane. Part of the ABC transporter complex AraNPQ involved in the uptake of arabinooligosaccharides. Responsible for the translocation of the substrate across the membrane. The protein is Arabinooligosaccharides transport system permease protein AraQ (araQ) of Halalkalibacterium halodurans (strain ATCC BAA-125 / DSM 18197 / FERM 7344 / JCM 9153 / C-125) (Bacillus halodurans).